A 122-amino-acid chain; its full sequence is Large ribosomal subunit protein uL14 (122 aa).

Belongs to the universal ribosomal protein uL14 family. In terms of assembly, part of the 50S ribosomal subunit. Forms a cluster with proteins L3 and L19. In the 70S ribosome, L14 and L19 interact and together make contacts with the 16S rRNA in bridges B5 and B8.

Binds to 23S rRNA. Forms part of two intersubunit bridges in the 70S ribosome. In Nocardia farcinica (strain IFM 10152), this protein is Large ribosomal subunit protein uL14.